Reading from the N-terminus, the 503-residue chain is Aromatase (503 aa).

The chain crosses the membrane as a helical span at residues 21–41 (VTVSAMPLLLIMGLLLLIWNC). Aspartate 309 and methionine 374 together coordinate substrate. Cysteine 437 serves as a coordination point for heme.

The protein belongs to the cytochrome P450 family. Heme is required as a cofactor.

The protein localises to the endoplasmic reticulum membrane. It localises to the microsome membrane. It carries out the reaction testosterone + 3 reduced [NADPH--hemoprotein reductase] + 3 O2 = 17beta-estradiol + formate + 3 oxidized [NADPH--hemoprotein reductase] + 4 H2O + 4 H(+). The enzyme catalyses androst-4-ene-3,17-dione + 3 reduced [NADPH--hemoprotein reductase] + 3 O2 = estrone + formate + 3 oxidized [NADPH--hemoprotein reductase] + 4 H2O + 4 H(+). It catalyses the reaction androst-4-ene-3,17-dione + reduced [NADPH--hemoprotein reductase] + O2 = 19-hydroxyandrost-4-ene-3,17-dione + oxidized [NADPH--hemoprotein reductase] + H2O + H(+). The catalysed reaction is 19-hydroxyandrost-4-ene-3,17-dione + reduced [NADPH--hemoprotein reductase] + O2 = 19-oxo-androst-4-ene-3,17-dione + oxidized [NADPH--hemoprotein reductase] + 2 H2O + H(+). It carries out the reaction 19-oxo-androst-4-ene-3,17-dione + reduced [NADPH--hemoprotein reductase] + O2 = estrone + formate + oxidized [NADPH--hemoprotein reductase] + H2O + 2 H(+). The enzyme catalyses estrone + reduced [NADPH--hemoprotein reductase] + O2 = 2-hydroxyestrone + oxidized [NADPH--hemoprotein reductase] + H2O + H(+). It catalyses the reaction 17beta-hydroxy-5alpha-androstan-3-one + reduced [NADPH--hemoprotein reductase] + O2 = 17beta,19-dihydroxy-3-oxo-5alpha-androstanone + oxidized [NADPH--hemoprotein reductase] + H2O + H(+). The catalysed reaction is 17beta,19-dihydroxy-3-oxo-5alpha-androstanone + reduced [NADPH--hemoprotein reductase] + O2 = 17beta-hydroxy-3,19-dioxo-5alpha-androstanone + oxidized [NADPH--hemoprotein reductase] + 2 H2O + H(+). It carries out the reaction 17beta-hydroxy-3,19-dioxo-5alpha-androstanone + reduced [NADPH--hemoprotein reductase] + O2 = 17beta-hydroxy-3-oxo-19-nor-5alpha-androst-1-ene + formate + oxidized [NADPH--hemoprotein reductase] + H2O + 2 H(+). It functions in the pathway steroid hormone biosynthesis. In terms of biological role, a cytochrome P450 monooxygenase that catalyzes the conversion of C19 androgens, androst-4-ene-3,17-dione (androstenedione) and testosterone to the C18 estrogens, estrone and estradiol, respectively. Catalyzes three successive oxidations of C19 androgens: two conventional oxidations at C19 yielding 19-hydroxy and 19-oxo/19-aldehyde derivatives, followed by a third oxidative aromatization step that involves C1-beta hydrogen abstraction combined with cleavage of the C10-C19 bond to yield a phenolic A ring and formic acid. Alternatively, the third oxidative reaction yields a 19-norsteroid and formic acid. Converts dihydrotestosterone to delta1,10-dehydro 19-nordihydrotestosterone and may play a role in homeostasis of this potent androgen. Also displays 2-hydroxylase activity toward estrone. Mechanistically, uses molecular oxygen inserting one oxygen atom into a substrate, and reducing the second into a water molecule, with two electrons provided by NADPH via cytochrome P450 reductase (CPR; NADPH-ferrihemoprotein reductase). In Mus musculus (Mouse), this protein is Aromatase (Cyp19a1).